A 257-amino-acid chain; its full sequence is Zinc import ATP-binding protein ZnuC (257 aa).

The region spanning 5–220 (ITLKNVAVNF…PEFIAMFGHH (216 aa)) is the ABC transporter domain. 37–44 (GPNGAGKS) is an ATP binding site.

Belongs to the ABC transporter superfamily. Zinc importer (TC 3.A.1.15.5) family. The complex is composed of two ATP-binding proteins (ZnuC), two transmembrane proteins (ZnuB) and a solute-binding protein (ZnuA).

Its subcellular location is the cell inner membrane. The catalysed reaction is Zn(2+)(out) + ATP(in) + H2O(in) = Zn(2+)(in) + ADP(in) + phosphate(in) + H(+)(in). Its function is as follows. Part of the ABC transporter complex ZnuABC involved in zinc import. Responsible for energy coupling to the transport system. This is Zinc import ATP-binding protein ZnuC from Photorhabdus laumondii subsp. laumondii (strain DSM 15139 / CIP 105565 / TT01) (Photorhabdus luminescens subsp. laumondii).